Here is a 511-residue protein sequence, read N- to C-terminus: Maturase K (511 aa).

This sequence belongs to the intron maturase 2 family. MatK subfamily.

The protein resides in the plastid. Its subcellular location is the chloroplast. Functionally, usually encoded in the trnK tRNA gene intron. Probably assists in splicing its own and other chloroplast group II introns. This Pistia stratiotes (Water lettuce) protein is Maturase K.